Consider the following 311-residue polypeptide: Porphobilinogen deaminase (311 aa).

Cys-242 carries the S-(dipyrrolylmethanemethyl)cysteine modification.

It belongs to the HMBS family. As to quaternary structure, monomer. Dipyrromethane serves as cofactor.

The enzyme catalyses 4 porphobilinogen + H2O = hydroxymethylbilane + 4 NH4(+). The protein operates within porphyrin-containing compound metabolism; protoporphyrin-IX biosynthesis; coproporphyrinogen-III from 5-aminolevulinate: step 2/4. In terms of biological role, tetrapolymerization of the monopyrrole PBG into the hydroxymethylbilane pre-uroporphyrinogen in several discrete steps. This is Porphobilinogen deaminase from Baumannia cicadellinicola subsp. Homalodisca coagulata.